Consider the following 116-residue polypeptide: MAGRSGDSEEELLKTVRLIKFLYQSNPPPKPEGTRQARRNRRRRWRERQRQIRSISGWILSNYLGRLAEPVPLQLPPLERLTLDCNEDCGTSGTQGVGSPQILVESPTVLESGTKE.

Phosphoserine; by host CK2 is present on residues Ser5 and Ser8. The segment at 18–26 is homomultimerization; the sequence is LIKFLYQSN. Residues 23–48 form a disordered region; sequence YQSNPPPKPEGTRQARRNRRRRWRER. Positions 34-50 match the Nuclear localization signal and RNA-binding (RRE) motif; it reads TRQARRNRRRRWRERQR. Positions 36–47 are enriched in basic residues; that stretch reads QARRNRRRRWRE. The Nuclear export signal and binding to XPO1 motif lies at 73–84; that stretch reads LQLPPLERLTLD. A phosphoserine; by host mark is found at Ser92 and Ser99. Residues 92–116 are disordered; it reads SGTQGVGSPQILVESPTVLESGTKE.

It belongs to the HIV-1 REV protein family. Homomultimer; when bound to the RRE. Multimeric assembly is essential for activity and may involve XPO1. Binds to human KPNB1, XPO1, TNPO1, RANBP5 and IPO7. Interacts with the viral Integrase. Interacts with human KHDRBS1. Interacts with human NAP1; this interaction decreases Rev multimerization and stimulates its activity. Interacts with human DEAD-box helicases DDX3 and DDX24; these interactions may serve for viral RNA export to the cytoplasm and packaging, respectively. Interacts with human PSIP1; this interaction may inhibit HIV-1 DNA integration by promoting dissociation of the Integrase-LEDGF/p75 complex. Post-translationally, asymmetrically arginine dimethylated at one site by host PRMT6. Methylation impairs the RNA-binding activity and export of viral RNA from the nucleus to the cytoplasm. In terms of processing, phosphorylated by protein kinase CK2. Presence of, and maybe binding to the N-terminus of the regulatory beta subunit of CK2 is necessary for CK2-mediated Rev's phosphorylation.

The protein localises to the host nucleus. It is found in the host nucleolus. The protein resides in the host cytoplasm. In terms of biological role, escorts unspliced or incompletely spliced viral pre-mRNAs (late transcripts) out of the nucleus of infected cells. These pre-mRNAs carry a recognition sequence called Rev responsive element (RRE) located in the env gene, that is not present in fully spliced viral mRNAs (early transcripts). This function is essential since most viral proteins are translated from unspliced or partially spliced pre-mRNAs which cannot exit the nucleus by the pathway used by fully processed cellular mRNAs. Rev itself is translated from a fully spliced mRNA that readily exits the nucleus. Rev's nuclear localization signal (NLS) binds directly to KPNB1/Importin beta-1 without previous binding to KPNA1/Importin alpha-1. KPNB1 binds to the GDP bound form of RAN (Ran-GDP) and targets Rev to the nucleus. In the nucleus, the conversion from Ran-GDP to Ran-GTP dissociates Rev from KPNB1 and allows Rev's binding to the RRE in viral pre-mRNAs. Rev multimerization on the RRE via cooperative assembly exposes its nuclear export signal (NES) to the surface. Rev can then form a complex with XPO1/CRM1 and Ran-GTP, leading to nuclear export of the complex. Conversion from Ran-GTP to Ran-GDP mediates dissociation of the Rev/RRE/XPO1/RAN complex, so that Rev can return to the nucleus for a subsequent round of export. Beside KPNB1, also seems to interact with TNPO1/Transportin-1, RANBP5/IPO5 and IPO7/RANBP7 for nuclear import. The nucleoporin-like HRB/RIP is an essential cofactor that probably indirectly interacts with Rev to release HIV RNAs from the perinuclear region to the cytoplasm. The chain is Protein Rev from Human immunodeficiency virus type 1 group M subtype B (isolate SC) (HIV-1).